Here is a 257-residue protein sequence, read N- to C-terminus: Dihydroorotate dehydrogenase B (NAD(+)), electron transfer subunit (257 aa).

The FAD-binding FR-type domain occupies 2-102 (IGRERMTVVS…LGPLGHGFPL (101 aa)). FAD-binding positions include 53–56 (RPLS), 70–72 (IYR), and 77–78 (GT). Cys221, Cys226, Cys229, and Cys244 together coordinate [2Fe-2S] cluster.

Belongs to the PyrK family. As to quaternary structure, heterotetramer of 2 PyrK and 2 PyrD type B subunits. [2Fe-2S] cluster serves as cofactor. The cofactor is FAD.

It participates in pyrimidine metabolism; UMP biosynthesis via de novo pathway; orotate from (S)-dihydroorotate (NAD(+) route): step 1/1. Responsible for channeling the electrons from the oxidation of dihydroorotate from the FMN redox center in the PyrD type B subunit to the ultimate electron acceptor NAD(+). The protein is Dihydroorotate dehydrogenase B (NAD(+)), electron transfer subunit of Geobacillus thermodenitrificans (strain NG80-2).